A 921-amino-acid chain; its full sequence is MSTKVRKCKEQARVTFPAPEEEEDEGEDEGAEPQRRRRGWRGVNGGLEPRSAPSQREPHGYCPPPFSHGPDLSMEGSPSLRRMTVMREKGRRQAVRGPAFMFNDRGTSLTAEEERFLDAAEYGNIPVVRKMLEESKTLNVNCVDYMGQNALQLAVGNEHLEVTELLLKKENLARIGDALLLAISKGYVRIVEAILNHPGFAASKRLTLSPCEQELQDDDFYAYDEDGTRFSPDITPIILAAHCQKYEVVHMLLMKGARIERPHDYFCKCGDCMEKQRHDSFSHSRSRINAYKGLASPAYLSLSSEDPVLTALELSNELAKLANIEKEFKNDYRKLSMQCKDFVVGVLDLCRDSEEVEAILNGDLESAEPLEVHRHKASLSRVKLAIKYEVKKFVAHPNCQQQLLTIWYENLSGLREQTIAIKCLVVLVVALGLPFLAIGYWIAPCSRLGKILRSPFMKFVAHAASFIIFLGLLVFNASDRFEGITTLPNITVTDYPKQIFRVKTTQFTWTEMLIMVWVLGMMWSECKELWLEGPREYILQLWNVLDFGMLSIFIAAFTARFLAFLQATKAQQYVDSYVQESDLSEVTLPPEIQYFTYARDKWLPSDPQIISEGLYAIAVVLSFSRIAYILPANESFGPLQISLGRTVKDIFKFMVLFIMVFFAFMIGMFILYSYYLGAKVNAAFTTVEESFKTLFWSIFGLSEVTSVVLKYDHKFIENIGYVLYGIYNVTMVVVLLNMLIAMINSSYQEIEDDSDVEWKFARSKLWLSYFDDGKTLPPPFSLVPSPKSFVYFIMRIVNFPKCRRRRLQKDIEMGMGNSKSRLNLFTQSNSRVFESHSFNSILNQPTRYQQIMKRLIKRYVLKAQVDKENDEVNEGELKEIKQDISSLRYELLEDKSQATEELAILIHKLSEKLNPSMLRCE.

A disordered region spans residues 1-73 (MSTKVRKCKE…PPFSHGPDLS (73 aa)). Residues 1–459 (MSTKVRKCKE…KILRSPFMKF (459 aa)) lie on the Cytoplasmic side of the membrane. Residues 19–31 (PEEEEDEGEDEGA) show a composition bias toward acidic residues. ANK repeat units follow at residues 111–140 (AEEE…TLNV), 146–175 (MGQN…LARI), 177–203 (DALL…FAAS), and 232–261 (PDIT…RIER). Residue E158 coordinates Ca(2+). The chain crosses the membrane as a helical span at residues 460–477 (VAHAASFIIFLGLLVFNA). Topologically, residues 478 to 508 (SDRFEGITTLPNITVTDYPKQIFRVKTTQFT) are extracellular. N489 carries N-linked (GlcNAc...) asparagine glycosylation. The chain crosses the membrane as a helical span at residues 509–527 (WTEMLIMVWVLGMMWSECK). Positions 525, 528, and 543 each coordinate Ca(2+). Topologically, residues 528–540 (ELWLEGPREYILQ) are cytoplasmic. Residues 541–562 (LWNVLDFGMLSIFIAAFTARFL) traverse the membrane as a helical segment. Residues 563–606 (AFLQATKAQQYVDSYVQESDLSEVTLPPEIQYFTYARDKWLPSD) are Extracellular-facing. A helical transmembrane segment spans residues 607 to 630 (PQIISEGLYAIAVVLSFSRIAYIL). Topologically, residues 631–649 (PANESFGPLQISLGRTVKD) are cytoplasmic. Residues 634-663 (ESFGPLQISLGRTVKDIFKFMVLFIMVFFA) form an ANK 5 repeat. The chain crosses the membrane as a helical span at residues 650 to 673 (IFKFMVLFIMVFFAFMIGMFILYS). Residues 674 to 713 (YYLGAKVNAAFTTVEESFKTLFWSIFGLSEVTSVVLKYDH) are Extracellular-facing. Residues 714 to 739 (KFIENIGYVLYGIYNVTMVVVLLNML) traverse the membrane as a helical segment. Residues 740-921 (IAMINSSYQE…KLNPSMLRCE (182 aa)) lie on the Cytoplasmic side of the membrane. A binds to IP3R3 region spans residues 850–870 (QIMKRLIKRYVLKAQVDKEND). Residues E871, E874, E876, and D883 each coordinate Ca(2+).

Belongs to the transient receptor (TC 1.A.4) family. STrpC subfamily. TRPC3 sub-subfamily. Homotetramer. Interacts with ITPR1. Interacts with ITPR3. Interacts with MX1. Interacts with RNF24. Interacts with JPH2; the interaction is involved in maintaining Ca(2+) homeostasis in skeletal muscle and is mediated by JPH2 'Ser-165' phosphorylation. In terms of assembly, interacts with isoform short of TRPC1. In terms of tissue distribution, expressed predominantly in brain and at much lower levels in ovary, colon, small intestine, lung, prostate, placenta and testis.

The protein resides in the cell membrane. It catalyses the reaction Ca(2+)(in) = Ca(2+)(out). Its activity is regulated as follows. Activated by diacylglycerol (DAG) in a membrane-delimited fashion, independently of protein kinase C. Activated by inositol 1,4,5-triphosphate receptors (ITPR) with bound IP3. May be activated by internal calcium store depletion. Inhibited by intracellular Ca(2+). Its function is as follows. Forms a receptor-activated non-selective calcium permeant cation channel. Functionally, forms a receptor-activated non-selective calcium permeant cation channel. May be operated by a phosphatidylinositol second messenger system activated by receptor tyrosine kinases or G-protein coupled receptors. This Homo sapiens (Human) protein is Short transient receptor potential channel 3 (TRPC3).